The sequence spans 302 residues: Urease accessory protein UreD 2 (302 aa).

Belongs to the UreD family. UreD, UreF and UreG form a complex that acts as a GTP-hydrolysis-dependent molecular chaperone, activating the urease apoprotein by helping to assemble the nickel containing metallocenter of UreC. The UreE protein probably delivers the nickel.

It localises to the cytoplasm. Its function is as follows. Required for maturation of urease via the functional incorporation of the urease nickel metallocenter. The polypeptide is Urease accessory protein UreD 2 (Brucella canis (strain ATCC 23365 / NCTC 10854 / RM-666)).